We begin with the raw amino-acid sequence, 61 residues long: Small ribosomal subunit protein uS14 (61 aa).

Residues C24, C27, C40, and C43 each coordinate Zn(2+).

It belongs to the universal ribosomal protein uS14 family. Zinc-binding uS14 subfamily. Part of the 30S ribosomal subunit. Contacts proteins S3 and S10. It depends on Zn(2+) as a cofactor.

Its function is as follows. Binds 16S rRNA, required for the assembly of 30S particles and may also be responsible for determining the conformation of the 16S rRNA at the A site. The sequence is that of Small ribosomal subunit protein uS14 from Thermobifida fusca (strain YX).